We begin with the raw amino-acid sequence, 260 residues long: Phosphate import ATP-binding protein PstB 1 (260 aa).

In terms of domain architecture, ABC transporter spans 13 to 255; sequence ISARDLNVHY…PQHPLTQGYI (243 aa). 45–52 is an ATP binding site; that stretch reads GPSGCGKS.

The protein belongs to the ABC transporter superfamily. Phosphate importer (TC 3.A.1.7) family. In terms of assembly, the complex is composed of two ATP-binding proteins (PstB), two transmembrane proteins (PstC and PstA) and a solute-binding protein (PstS).

It is found in the cell inner membrane. The catalysed reaction is phosphate(out) + ATP + H2O = ADP + 2 phosphate(in) + H(+). Part of the ABC transporter complex PstSACB involved in phosphate import. Responsible for energy coupling to the transport system. This is Phosphate import ATP-binding protein PstB 1 from Paramagnetospirillum magneticum (strain ATCC 700264 / AMB-1) (Magnetospirillum magneticum).